The following is a 361-amino-acid chain: Prostaglandin D2 receptor (361 aa).

The Extracellular portion of the chain corresponds to 1–21 (MRPLFYRCHNTTSVEKGNSAT). Residue asparagine 10 is glycosylated (N-linked (GlcNAc...) asparagine). The helical transmembrane segment at 22-42 (MGGVLFSTGLVGNLLALGLLA) threads the bilayer. Residues 43–58 (RSGLGSCPPRSPRPPP) are Cytoplasmic-facing. The helical transmembrane segment at 59–79 (SVFYVLVFGLTITDLLGKCLV) threads the bilayer. The Extracellular segment spans residues 80 to 107 (SPFVLSAYAQNRSLRELVPGSDSSLCQA). N-linked (GlcNAc...) asparagine glycosylation is present at asparagine 90. Cysteine 105 and cysteine 183 form a disulfide bridge. Residues 108-128 (FAFIMSFFGLASTLQLLAMAL) form a helical membrane-spanning segment. Residues 129 to 150 (ECWLSLGHPFFHRRHLTPRRGA) lie on the Cytoplasmic side of the membrane. The helical transmembrane segment at 151 to 171 (MVAPVVGAFCLAFCALPLVGF) threads the bilayer. Residues 172–195 (GKFVQYCPGTWCFFQMVHEERSLS) lie on the Extracellular side of the membrane. The chain crosses the membrane as a helical span at residues 196 to 216 (VLSYSVLYASLMLLLVLAIVL). At 217 to 262 (CNLSAMRNLYAMHLRLRGLLRPGSRERAEPGAGEREATPLHLEELD) the chain is on the cytoplasmic side. A helical membrane pass occupies residues 263–283 (HLLLLALMTVLFTMCSLPLIY). At 284 to 310 (RAYYGAFKAVPEQNGTTEETEDLRALR) the chain is on the extracellular side. Asparagine 297 carries N-linked (GlcNAc...) asparagine glycosylation. The helical transmembrane segment at 311–331 (FLSVISIVDPWIFIIFRTSVF) threads the bilayer. Residues 332–361 (RMFFRKIFIRPLIYRNWHSNSCQTNMESSL) are Cytoplasmic-facing.

The protein belongs to the G-protein coupled receptor 1 family.

It localises to the cell membrane. Its function is as follows. Receptor for prostaglandin D2 (PGD2). The activity of this receptor is mainly mediated by G(s) proteins that stimulate adenylate cyclase, resulting in an elevation of intracellular cAMP. A mobilization of calcium is also observed, but without formation of inositol 1,4,5-trisphosphate. Involved in PLA2G3-dependent maturation of mast cells. PLA2G3 is secreted by immature mast cells and acts on nearby fibroblasts upstream to PTDGS to synthesize PGD2, which in turn promotes mast cell maturation and degranulation via PTGDR. The chain is Prostaglandin D2 receptor (PTGDR) from Bos taurus (Bovine).